A 1520-amino-acid polypeptide reads, in one-letter code: Glutamate synthase [NADPH] large chain (1520 aa).

Cys22 (for GATase activity) is an active-site residue. Positions 22–415 constitute a Glutamine amidotransferase type-2 domain; the sequence is CGIGLYAHLK…PGKMLLIDLE (394 aa). A disordered region spans residues 890–913; the sequence is GGKSNSGEGGEDPKRFVPDENGDD. Positions 900–913 are enriched in basic and acidic residues; that stretch reads EDPKRFVPDENGDD. 1060–1112 contributes to the FMN binding site; the sequence is LAEAHQTLMLNGLRDRVVLETDGKLMTGRDVVMAALLGAEEFGFATAPLVVLG. [3Fe-4S] cluster-binding residues include Cys1113, Cys1119, and Cys1124.

This sequence belongs to the glutamate synthase family. In terms of assembly, aggregate of 4 catalytic active heterodimers, consisting of a large and a small subunit. It depends on [3Fe-4S] cluster as a cofactor. FAD serves as cofactor. Requires FMN as cofactor.

The catalysed reaction is 2 L-glutamate + NADP(+) = L-glutamine + 2-oxoglutarate + NADPH + H(+). The protein operates within amino-acid biosynthesis; L-glutamate biosynthesis via GLT pathway; L-glutamate from 2-oxoglutarate and L-glutamine (NADP(+) route): step 1/1. It participates in energy metabolism; nitrogen metabolism. This chain is Glutamate synthase [NADPH] large chain (gltA), found in Bacillus subtilis (strain 168).